A 125-amino-acid chain; its full sequence is Morphine 6-dehydrogenase (125 aa).

NADP(+)-binding positions include 9-18 and 74-111; these read GHSIPVLGFI and SALG…IERE.

It belongs to the aldo/keto reductase family. Monomer. Post-translationally, the N-terminus is blocked.

The protein localises to the cytoplasm. It carries out the reaction morphine + NAD(+) = morphinone + NADH + H(+). The enzyme catalyses morphine + NADP(+) = morphinone + NADPH + H(+). With respect to regulation, strongly inhibited by sulfhydryl reagents and quercetin, but not by pyrazole, barbital and indomethacine. Catalyzes the dehydrogenation of morphine to morphinone. Uses both NAD and NADP, but the activity is much greater with NAD than with NADP. This chain is Morphine 6-dehydrogenase, found in Oryctolagus cuniculus (Rabbit).